Here is a 444-residue protein sequence, read N- to C-terminus: MVKDEITTTKYLIHSQINAKGFVEKPDVVGAIFGQTEGLLSDSLDLRELQKTGRIGRIKVDMTNRSGRTKGEIIIPSSLDRIETTILAASLETINRVGPCEANLRVTKIEDVRAVKRRTIVERAKELYQNMMEEFTPESSRMIDEVKESIRRPEIIEYGEDNLPAGPNTPTSDAILIVEGRSDVLNLLKYGIKNTIAVEGVNVPKTVADLTKKRTVTAFLDGDRGGDLILKELLQIGDIDYVTRAPRGLEVEYLDKDQVIYALKNKTSVDKITSHANYNHNQHRYHNKPKSHDKFESKLHEVTSSVNKTDKYSQKNESKQFKQQKNENKQVKDNSKEKTQKSTEKHNETEETHLNKYELMLKELSGTGKGRLYDMDFNLLKEVKVSDIYNEVKNSKETIKNIVFDGIITQRIVDLSKEKNIECLVAVKMSEVVKKPETIKIITK.

The Toprim domain maps to 173–250 (DAILIVEGRS…YVTRAPRGLE (78 aa)). Positions 179, 221, and 223 each coordinate Mg(2+). Positions 302–354 (VTSSVNKTDKYSQKNESKQFKQQKNENKQVKDNSKEKTQKSTEKHNETEETHL) are disordered. Residues 308–354 (KTDKYSQKNESKQFKQQKNENKQVKDNSKEKTQKSTEKHNETEETHL) show a composition bias toward basic and acidic residues.

The protein belongs to the archaeal DnaG primase family. Forms a ternary complex with MCM helicase and DNA. Component of the archaeal exosome complex. Mg(2+) is required as a cofactor.

The enzyme catalyses ssDNA + n NTP = ssDNA/pppN(pN)n-1 hybrid + (n-1) diphosphate.. In terms of biological role, RNA polymerase that catalyzes the synthesis of short RNA molecules used as primers for DNA polymerase during DNA replication. Also part of the exosome, which is a complex involved in RNA degradation. Acts as a poly(A)-binding protein that enhances the interaction between heteromeric, adenine-rich transcripts and the exosome. The protein is DNA primase DnaG of Methanosphaera stadtmanae (strain ATCC 43021 / DSM 3091 / JCM 11832 / MCB-3).